Here is a 205-residue protein sequence, read N- to C-terminus: ATP-dependent Clp protease proteolytic subunit (205 aa).

The active-site Nucleophile is Ser-98. His-123 is an active-site residue.

This sequence belongs to the peptidase S14 family. In terms of assembly, fourteen ClpP subunits assemble into 2 heptameric rings which stack back to back to give a disk-like structure with a central cavity, resembling the structure of eukaryotic proteasomes.

Its subcellular location is the cytoplasm. It catalyses the reaction Hydrolysis of proteins to small peptides in the presence of ATP and magnesium. alpha-casein is the usual test substrate. In the absence of ATP, only oligopeptides shorter than five residues are hydrolyzed (such as succinyl-Leu-Tyr-|-NHMec, and Leu-Tyr-Leu-|-Tyr-Trp, in which cleavage of the -Tyr-|-Leu- and -Tyr-|-Trp bonds also occurs).. Its function is as follows. Cleaves peptides in various proteins in a process that requires ATP hydrolysis. Has a chymotrypsin-like activity. Plays a major role in the degradation of misfolded proteins. The protein is ATP-dependent Clp protease proteolytic subunit of Desulfosudis oleivorans (strain DSM 6200 / JCM 39069 / Hxd3) (Desulfococcus oleovorans).